A 354-amino-acid polypeptide reads, in one-letter code: S-adenosylmethionine:tRNA ribosyltransferase-isomerase (354 aa).

Belongs to the QueA family. As to quaternary structure, monomer.

It is found in the cytoplasm. It catalyses the reaction 7-aminomethyl-7-carbaguanosine(34) in tRNA + S-adenosyl-L-methionine = epoxyqueuosine(34) in tRNA + adenine + L-methionine + 2 H(+). The protein operates within tRNA modification; tRNA-queuosine biosynthesis. Functionally, transfers and isomerizes the ribose moiety from AdoMet to the 7-aminomethyl group of 7-deazaguanine (preQ1-tRNA) to give epoxyqueuosine (oQ-tRNA). This chain is S-adenosylmethionine:tRNA ribosyltransferase-isomerase, found in Pseudomonas savastanoi pv. phaseolicola (strain 1448A / Race 6) (Pseudomonas syringae pv. phaseolicola (strain 1448A / Race 6)).